The primary structure comprises 185 residues: MNNETIAKAKRNMNKSIEVYQSNLATVRAGVANASLLDRVMVEYYGVPTPLVQMAGITIPEPRVLMITPYDKSSLNDIEHAILASDLGLTPANDGNVIRLIIPQLTGERRQEIAKEVGKLAEEAKIAVRNVRQEAMKALKKQEKDGEITEDEERRLEKEVQKVTDESTKKIDQMADNKRKEIIQG.

The interval 138 to 185 (ALKKQEKDGEITEDEERRLEKEVQKVTDESTKKIDQMADNKRKEIIQG) is disordered.

This sequence belongs to the RRF family.

Its subcellular location is the cytoplasm. Functionally, responsible for the release of ribosomes from messenger RNA at the termination of protein biosynthesis. May increase the efficiency of translation by recycling ribosomes from one round of translation to another. The sequence is that of Ribosome-recycling factor from Lactobacillus delbrueckii subsp. bulgaricus (strain ATCC BAA-365 / Lb-18).